The following is a 333-amino-acid chain: Sphingomyelinase C (333 aa).

Positions 1 to 27 (MKGKLLKGVLSFGIGLGVLYGGSSVQA) are cleaved as a signal peptide. An intrachain disulfide couples Cys-150 to Cys-186.

This sequence belongs to the neutral sphingomyelinase family. The cofactor is Mg(2+).

Its subcellular location is the secreted. It carries out the reaction a sphingomyelin + H2O = phosphocholine + an N-acylsphing-4-enine + H(+). With respect to regulation, activated by cobalt and manganese ions. Required, with sphingomyelinase, to effect target cell lysis (hemolysis). The polypeptide is Sphingomyelinase C (sph) (Bacillus cereus).